Consider the following 96-residue polypeptide: Co-chaperonin GroES (96 aa).

Belongs to the GroES chaperonin family. As to quaternary structure, heptamer of 7 subunits arranged in a ring. Interacts with the chaperonin GroEL.

It localises to the cytoplasm. Functionally, together with the chaperonin GroEL, plays an essential role in assisting protein folding. The GroEL-GroES system forms a nano-cage that allows encapsulation of the non-native substrate proteins and provides a physical environment optimized to promote and accelerate protein folding. GroES binds to the apical surface of the GroEL ring, thereby capping the opening of the GroEL channel. The chain is Co-chaperonin GroES from Aggregatibacter actinomycetemcomitans (Actinobacillus actinomycetemcomitans).